Reading from the N-terminus, the 333-residue chain is Cysteine protease (333 aa).

Residues 1–18 form the signal peptide; sequence MKFLLVAALCALVAIGSC. Residues 19–108 constitute a propeptide, activation peptide; that stretch reads KPTREEIKTF…MEAAKEPLIN (90 aa). N93 carries an N-linked (GlcNAc...) asparagine glycan. 2 disulfide bridges follow: C134–C182 and C168–C214. The active site involves C137. Catalysis depends on residues H281 and N301.

This sequence belongs to the peptidase C1 family. As to quaternary structure, homodimer.

Cysteine protease. The chain is Cysteine protease from Blomia tropicalis (Mite).